Consider the following 350-residue polypeptide: tRNA uridine(34) hydroxylase (350 aa).

Residues 146 to 240 (DDPDAVFIDM…YARRAREQGL (95 aa)) form the Rhodanese domain. The active-site Cysteine persulfide intermediate is the Cys-200. Positions 319–328 (RRRRAGRENG) are enriched in basic and acidic residues. Positions 319–350 (RRRRAGRENGNKIFNKSRGRLNSKLSIPDPAE) are disordered.

Belongs to the TrhO family.

It carries out the reaction uridine(34) in tRNA + AH2 + O2 = 5-hydroxyuridine(34) in tRNA + A + H2O. In terms of biological role, catalyzes oxygen-dependent 5-hydroxyuridine (ho5U) modification at position 34 in tRNAs. This Salmonella heidelberg (strain SL476) protein is tRNA uridine(34) hydroxylase.